We begin with the raw amino-acid sequence, 284 residues long: Tropomyosin Lep s 1.0101 (284 aa).

Residues 1-273 are a coiled coil; sequence MEAIKKKMQA…KDRYRALADE (273 aa). The segment covering 155–171 has biased composition (basic and acidic residues); that stretch reads AEDADGKSDEVSRKMAQ. Residues 155–187 form a disordered region; the sequence is AEDADGKSDEVSRKMAQVEDDLEVAEDRVKSGD.

Belongs to the tropomyosin family. Homodimer.

Its function is as follows. Tropomyosin, in association with the troponin complex, plays a central role in the calcium dependent regulation of muscle contraction. This is Tropomyosin Lep s 1.0101 from Lepisma saccharinum (Silverfish).